We begin with the raw amino-acid sequence, 247 residues long: ATP synthase subunit a, chloroplastic (247 aa).

5 consecutive transmembrane segments (helical) span residues 38 to 58 (QVLITSWVVIAILLGSVTLAV), 95 to 115 (VPFIGTMFLFIFVSNWSGALL), 134 to 154 (INTTVALALLTSVAYFYAGLS), 199 to 219 (LVVVVLVSLVPLVVPIPVMFL), and 220 to 240 (GLFTSGIQALIFATLAAAYIG).

It belongs to the ATPase A chain family. As to quaternary structure, F-type ATPases have 2 components, CF(1) - the catalytic core - and CF(0) - the membrane proton channel. CF(1) has five subunits: alpha(3), beta(3), gamma(1), delta(1), epsilon(1). CF(0) has four main subunits: a, b, b' and c.

The protein localises to the plastid. It is found in the chloroplast thylakoid membrane. Its function is as follows. Key component of the proton channel; it plays a direct role in the translocation of protons across the membrane. The polypeptide is ATP synthase subunit a, chloroplastic (Lemna minor (Common duckweed)).